Reading from the N-terminus, the 59-residue chain is Single-pass membrane and coiled-coil domain-containing protein 4 (59 aa).

Residues 1 to 23 (MRQLKGKPKKETSKDKKERKQAM) form a disordered region. Positions 9-22 (KKETSKDKKERKQA) are enriched in basic and acidic residues. Residues 9 to 31 (KKETSKDKKERKQAMQEARQQIT) adopt a coiled-coil conformation. Residues 32-52 (TVVLPTLAVVVLLIVVFVYVA) traverse the membrane as a helical segment.

This sequence belongs to the SMCO4 family.

It localises to the membrane. This Homo sapiens (Human) protein is Single-pass membrane and coiled-coil domain-containing protein 4 (SMCO4).